Reading from the N-terminus, the 373-residue chain is MTEELTTVRDACARTLENTARTLHLGASGTEFVAAFRAMTDHWGAARPHDLPLSDVSPDGSPVEYAVDLGGLAPALQFAMEPLTAGVPARDPLAARAIMPLLAGRYGADATRWSALADRLLPDDAHGPHVSMYGAEVRAGAPIRFKAWFYLNVTGPDGAFNLLYSALERMGTTHLWPVVQAHVHRAGEDVPFLLSLDLSDDPAARVKVYFRHFAADVEEVAAVLKAYPGFEPGEVRAFCKVMMGGRRRFSDQPAVTCVSLLDAQTFDRTAATLYVPLWTYAEHDGEVRQRVHRTLAAWPEALYRYDSVLAGIAHRGLDAGTGIHNYISWQPGRTRPRMKVYLSPEMHDVTPPPLGVSQQHHLSGQTTARGRTE.

3 residues coordinate L-tryptophan: aspartate 55, valine 56, and glutamate 64. Glutamate 64 acts as the Nucleophile in catalysis. Glutamine 77, lysine 146, tryptophan 148, arginine 205, and lysine 207 together coordinate dimethylallyl diphosphate. Arginine 211 provides a ligand contact to L-tryptophan. Tyrosine 274 serves as a coordination point for dimethylallyl diphosphate. Position 326 (tyrosine 326) interacts with L-tryptophan. Dimethylallyl diphosphate-binding residues include arginine 337, lysine 339, and tyrosine 341. Residues 346-373 (MHDVTPPPLGVSQQHHLSGQTTARGRTE) enclose the FtsK domain.

In terms of biological role, dimethylallyltryptophan synthase; part of the gene cluster that mediates the biosynthesis of cyclic heptapeptides, known as cyclomarins and also of cyclic dipeptides, called cyclomarazines, which have both antimicrobial and cytotoxic effects. Catalyzes the reverse N-prenylation of monomeric L-tryptophan with dimethylallyl diphosphate (DMAPP) to form N-(1,1-dimethylallyl)-tryptophan (r-N-DMAT). The formation of r-N-DMAT appears to proceed via the deprotonation of the indole nitrogen of tryptophan, which facilitates a nucleophilic attack on the carbocation that is forming on the dimethylallyl group as the diphosphate dissociates. The N-(1,1-dimethylallyl)-tryptophan produced by CymD is combined with a range of standard and nonproteinogenic amino acid substrates to synthesize the peptides, a process that is probably catalyzed by the non-canonical nonribosomal peptide synthetase (NRPS), CymA. Other proteins in the cluster catalyze further modifications of the peptides including CymV which catalyzes the oxidation of olefinic cyclomarins and cyclomarazines to their respective epoxide derivatives. Utilizes only DMAPP as the prenyl donor and has no requirement for divalent cations. The polypeptide is Dimethylallyltryptophan synthase CymD (Salinispora arenicola (strain CNS-205)).